The chain runs to 727 residues: 1,4-alpha-glucan branching enzyme GlgB (727 aa).

The active-site Nucleophile is aspartate 405. Glutamate 458 serves as the catalytic Proton donor.

Belongs to the glycosyl hydrolase 13 family. GlgB subfamily. In terms of assembly, monomer.

The enzyme catalyses Transfers a segment of a (1-&gt;4)-alpha-D-glucan chain to a primary hydroxy group in a similar glucan chain.. It functions in the pathway glycan biosynthesis; glycogen biosynthesis. In terms of biological role, catalyzes the formation of the alpha-1,6-glucosidic linkages in glycogen by scission of a 1,4-alpha-linked oligosaccharide from growing alpha-1,4-glucan chains and the subsequent attachment of the oligosaccharide to the alpha-1,6 position. This is 1,4-alpha-glucan branching enzyme GlgB from Yersinia enterocolitica serotype O:8 / biotype 1B (strain NCTC 13174 / 8081).